Consider the following 164-residue polypeptide: Diphosphoinositol polyphosphate phosphohydrolase 3-alpha (164 aa).

Substrate contacts are provided by residues Arg-9, 17 to 19, and 38 to 40; these read KKR and SSR. A Nudix hydrolase domain is found at 17–144; the sequence is KKRAACLCFR…VHAEYLEKLK (128 aa). Mg(2+)-binding residues include Gly-49 and Glu-65. The Nudix box signature appears at 50 to 71; that stretch reads GGMEPEEEPGGAAVREVYEEAG. The Proton acceptor role is filled by Glu-68. Glu-69 provides a ligand contact to Mg(2+). Substrate is bound by residues 89–91, Arg-115, and Lys-133; that span reads PKH. Residues 144–164 form a disordered region; that stretch reads KLGGSPTNGNSMAPSSPDSDP. Positions 148 to 164 are enriched in polar residues; sequence SPTNGNSMAPSSPDSDP.

Belongs to the Nudix hydrolase family. DIPP subfamily. The cofactor is Mg(2+). Mn(2+) serves as cofactor. As to expression, mainly expressed in testis and, at lower level in brain. According to PubMed:12121577, it is widely expressed.

Its subcellular location is the cytoplasm. It carries out the reaction diphospho-myo-inositol polyphosphate + H2O = myo-inositol polyphosphate + phosphate.. It catalyses the reaction P(1),P(6)-bis(5'-adenosyl) hexaphosphate + H2O = adenosine 5'-pentaphosphate + AMP + 2 H(+). The enzyme catalyses P(1),P(5)-bis(5'-adenosyl) pentaphosphate + H2O = adenosine 5'-tetraphosphate + AMP + 2 H(+). Cleaves a beta-phosphate from the diphosphate groups in PP-InsP5 (diphosphoinositol pentakisphosphate), suggesting that it may play a role in signal transduction. Also able to catalyze the hydrolysis of dinucleoside oligophosphates, with Ap6A and Ap5A being the preferred substrates. The major reaction products are ADP and p4a from Ap6A and ADP and ATP from Ap5A. Also able to hydrolyze 5-phosphoribose 1-diphosphate. This Homo sapiens (Human) protein is Diphosphoinositol polyphosphate phosphohydrolase 3-alpha (NUDT10).